The chain runs to 140 residues: uncharacterized protein (140 aa).

The N-terminal stretch at methionine 1 to alanine 22 is a signal peptide.

This is an uncharacterized protein from Archaeoglobus fulgidus (strain ATCC 49558 / DSM 4304 / JCM 9628 / NBRC 100126 / VC-16).